Reading from the N-terminus, the 275-residue chain is Dermonecrotic toxin LhSicTox-alphaVI1i (275 aa).

His-5 is a catalytic residue. Mg(2+) is bound by residues Glu-25 and Asp-27. Residue His-41 is the Nucleophile of the active site. Disulfide bonds link Cys-45–Cys-51 and Cys-47–Cys-192. Asp-85 contacts Mg(2+).

This sequence belongs to the arthropod phospholipase D family. Class II subfamily. Mg(2+) serves as cofactor. In terms of tissue distribution, expressed by the venom gland.

Its subcellular location is the secreted. It catalyses the reaction an N-(acyl)-sphingosylphosphocholine = an N-(acyl)-sphingosyl-1,3-cyclic phosphate + choline. The catalysed reaction is an N-(acyl)-sphingosylphosphoethanolamine = an N-(acyl)-sphingosyl-1,3-cyclic phosphate + ethanolamine. The enzyme catalyses a 1-acyl-sn-glycero-3-phosphocholine = a 1-acyl-sn-glycero-2,3-cyclic phosphate + choline. It carries out the reaction a 1-acyl-sn-glycero-3-phosphoethanolamine = a 1-acyl-sn-glycero-2,3-cyclic phosphate + ethanolamine. Its function is as follows. Dermonecrotic toxins cleave the phosphodiester linkage between the phosphate and headgroup of certain phospholipids (sphingolipid and lysolipid substrates), forming an alcohol (often choline) and a cyclic phosphate. This toxin acts on sphingomyelin (SM). It may also act on ceramide phosphoethanolamine (CPE), lysophosphatidylcholine (LPC) and lysophosphatidylethanolamine (LPE), but not on lysophosphatidylserine (LPS), and lysophosphatidylglycerol (LPG). It acts by transphosphatidylation, releasing exclusively cyclic phosphate products as second products. Induces dermonecrosis, hemolysis, increased vascular permeability, edema, inflammatory response, and platelet aggregation. This Loxosceles hirsuta (Recluse spider) protein is Dermonecrotic toxin LhSicTox-alphaVI1i.